The sequence spans 452 residues: Low-affinity putrescine importer PlaP (452 aa).

At 1–16 (MSHNVTPNTSRVELRK) the chain is on the cytoplasmic side. Residues 17–37 (TLTLVPVVMMGLAYMQPMTLF) form a helical membrane-spanning segment. Residues 38–48 (DTFGIVSGLTD) are Periplasmic-facing. The helical transmembrane segment at 49–69 (GHVPTAYAFALIAILFTALSY) threads the bilayer. Over 70-95 (GKLVRRYPSAGSAYTYAQKSISPTVG) the chain is Cytoplasmic. A helical transmembrane segment spans residues 96–116 (FMVGWSSLLDYLFAPMINILL). The Periplasmic portion of the chain corresponds to 117–123 (AKIYFEA). The chain crosses the membrane as a helical span at residues 124–144 (LVPSIPSWMFVVALVAFMTAF). Residues 145–158 (NLRSLKSVANFNTV) lie on the Cytoplasmic side of the membrane. The helical transmembrane segment at 159–179 (IVVLQVVLIAVILGMVVYGVF) threads the bilayer. The Periplasmic portion of the chain corresponds to 180–199 (EGEGAGTLASTRPFWSGDAH). The helical transmembrane segment at 200-220 (VIPMITGATILCFSFTGFDGI) threads the bilayer. Residues 221 to 237 (SNLSEETKDAERVIPRA) are Cytoplasmic-facing. The helical transmembrane segment at 238-258 (IFLTALIGGMIFIFATYFLQL) threads the bilayer. The Periplasmic portion of the chain corresponds to 259–283 (YFPDISRFKDPDASQPEIMLYVAGK). The chain crosses the membrane as a helical span at residues 284-304 (AFQVGALIFSTITVLASGMAA). The Cytoplasmic segment spans residues 305–339 (HAGVARLMYVMGRDGVFPKSFFGYVHPKWRTPAMN). A run of 2 helical transmembrane segments spans residues 340-360 (IILV…MATA) and 361-381 (LINF…ISQF). Topologically, residues 382-394 (WIREKRNKTLKDH) are cytoplasmic. A helical membrane pass occupies residues 395–415 (FQYLFLPMCGALTVGALWVNL). Residues 416-417 (EE) are Periplasmic-facing. A helical membrane pass occupies residues 418 to 438 (SSMVLGLIWAAIGLIYLACVT). Residues 439 to 452 (KSFRNPVPQYEDVA) are Cytoplasmic-facing.

The protein belongs to the amino acid-polyamine-organocation (APC) superfamily.

It localises to the cell inner membrane. The enzyme catalyses putrescine(in) + H(+)(in) = putrescine(out) + H(+)(out). In terms of biological role, putrescine importer. The polypeptide is Low-affinity putrescine importer PlaP (plaP) (Escherichia coli O157:H7).